Reading from the N-terminus, the 471-residue chain is MSQNIGKISQVIGAVIDVEFEPGKLPEIYHALRVTNPAIDDRENNLVLEVAQHLGENSVRTIAMDSTDGLKRGQAVIDTGKQICAPVGRKTLGRIMNVIGEPVDEMGPIGNEKEYGIHREAPAFEDQSTKVEAFTTGIKVVDLLAPYARGGKIGLFGGAGVGKTVLIMELINNIAKQHGGYSVFAGVGERTREGNDLWMEMKESGVLDKAALVYGQMNEPPGARARVALTALSVAEYFRDEENQDVLLFIDNIFRFTQAGSEVSALLGRIPSAVGYQPTLATEMGELQERITSTKKGSITSVQAIYVPADDLTDPAPATAFAHLDATTVLSRQIAELGIYPAVDPLDSTSRILDPQVIGEEHYAVARSVQYVLQKYKDLQDIIAILGMDELSEEDKLVVARARKIQRFLSQPFHVAEAFTGSPGKYVELKDTIKGFQEIVAGKHDNLPEQAFYMVGSIEEAIEKAAKLAAV.

Residue 157–164 (GGAGVGKT) coordinates ATP.

The protein belongs to the ATPase alpha/beta chains family. As to quaternary structure, F-type ATPases have 2 components, CF(1) - the catalytic core - and CF(0) - the membrane proton channel. CF(1) has five subunits: alpha(3), beta(3), gamma(1), delta(1), epsilon(1). CF(0) has three main subunits: a(1), b(2) and c(9-12). The alpha and beta chains form an alternating ring which encloses part of the gamma chain. CF(1) is attached to CF(0) by a central stalk formed by the gamma and epsilon chains, while a peripheral stalk is formed by the delta and b chains.

The protein localises to the cell inner membrane. It catalyses the reaction ATP + H2O + 4 H(+)(in) = ADP + phosphate + 5 H(+)(out). In terms of biological role, produces ATP from ADP in the presence of a proton gradient across the membrane. The catalytic sites are hosted primarily by the beta subunits. In Trichlorobacter lovleyi (strain ATCC BAA-1151 / DSM 17278 / SZ) (Geobacter lovleyi), this protein is ATP synthase subunit beta.